Here is a 115-residue protein sequence, read N- to C-terminus: Superoxide reductase (115 aa).

Residues Glu-14, His-16, His-41, His-47, Cys-102, and His-105 each contribute to the Fe cation site.

The protein belongs to the desulfoferrodoxin family. In terms of assembly, homotetramer. Fe cation is required as a cofactor.

It carries out the reaction reduced [rubredoxin] + superoxide + 2 H(+) = oxidized [rubredoxin] + H2O2. Uses electrons from reduced NADP, by way of rubredoxin and an oxidoreductase, to catalyze the reduction of superoxide to hydrogen peroxide. This chain is Superoxide reductase (sorA), found in Thermococcus kodakarensis (strain ATCC BAA-918 / JCM 12380 / KOD1) (Pyrococcus kodakaraensis (strain KOD1)).